The sequence spans 431 residues: Ribosomal RNA small subunit methyltransferase B (431 aa).

Residues 254 to 260 (CAAPGGK), Asp-277, Asp-303, and Asp-322 contribute to the S-adenosyl-L-methionine site. The active-site Nucleophile is the Cys-375.

The protein belongs to the class I-like SAM-binding methyltransferase superfamily. RsmB/NOP family.

Its subcellular location is the cytoplasm. It catalyses the reaction cytidine(967) in 16S rRNA + S-adenosyl-L-methionine = 5-methylcytidine(967) in 16S rRNA + S-adenosyl-L-homocysteine + H(+). Specifically methylates the cytosine at position 967 (m5C967) of 16S rRNA. The sequence is that of Ribosomal RNA small subunit methyltransferase B from Klebsiella pneumoniae subsp. pneumoniae (strain ATCC 700721 / MGH 78578).